Reading from the N-terminus, the 200-residue chain is Flavin prenyltransferase UbiX (200 aa).

Residues 15–17, threonine 41, 102–105, and arginine 137 contribute to the FMN site; these read GAS and SMGT. Residues tyrosine 167 and lysine 183 each contribute to the dimethylallyl phosphate site.

It belongs to the UbiX/PAD1 family.

The enzyme catalyses dimethylallyl phosphate + FMNH2 = prenylated FMNH2 + phosphate. Its function is as follows. Flavin prenyltransferase that catalyzes the synthesis of the prenylated FMN cofactor (prenyl-FMN) for 4-hydroxy-3-polyprenylbenzoic acid decarboxylase UbiD. The prenyltransferase is metal-independent and links a dimethylallyl moiety from dimethylallyl monophosphate (DMAP) to the flavin N5 and C6 atoms of FMN. The protein is Flavin prenyltransferase UbiX of Alkalihalophilus pseudofirmus (strain ATCC BAA-2126 / JCM 17055 / OF4) (Bacillus pseudofirmus).